The sequence spans 160 residues: Fluoride-specific ion channel FluC (160 aa).

The next 4 membrane-spanning stretches (helical) occupy residues 5-25 (LFIS…GLLF), 34-54 (FGTL…LGLF), 67-87 (FLIT…SEVV), and 99-119 (FCVL…GIWI). Na(+) is bound by residues glycine 74 and threonine 77.

Belongs to the fluoride channel Fluc/FEX (TC 1.A.43) family.

Its subcellular location is the cell inner membrane. It carries out the reaction fluoride(in) = fluoride(out). Its activity is regulated as follows. Na(+) is not transported, but it plays an essential structural role and its presence is essential for fluoride channel function. Its function is as follows. Fluoride-specific ion channel. Important for reducing fluoride concentration in the cell, thus reducing its toxicity. In Haemophilus influenzae (strain ATCC 51907 / DSM 11121 / KW20 / Rd), this protein is Fluoride-specific ion channel FluC.